The chain runs to 277 residues: Acetyl-coenzyme A carboxylase carboxyl transferase subunit beta (277 aa).

Residues 22–277 (LWTKCPGCNR…TLKQLLYFLT (256 aa)) enclose the CoA carboxyltransferase N-terminal domain. Zn(2+)-binding residues include Cys26, Cys29, Cys45, and Cys48. A C4-type zinc finger spans residues 26 to 48 (CPGCNRFLYTKELELNQSVCHYC).

This sequence belongs to the AccD/PCCB family. In terms of assembly, acetyl-CoA carboxylase is a heterohexamer composed of biotin carboxyl carrier protein (AccB), biotin carboxylase (AccC) and two subunits each of ACCase subunit alpha (AccA) and ACCase subunit beta (AccD). Zn(2+) is required as a cofactor.

It localises to the cytoplasm. It carries out the reaction N(6)-carboxybiotinyl-L-lysyl-[protein] + acetyl-CoA = N(6)-biotinyl-L-lysyl-[protein] + malonyl-CoA. It participates in lipid metabolism; malonyl-CoA biosynthesis; malonyl-CoA from acetyl-CoA: step 1/1. Functionally, component of the acetyl coenzyme A carboxylase (ACC) complex. Biotin carboxylase (BC) catalyzes the carboxylation of biotin on its carrier protein (BCCP) and then the CO(2) group is transferred by the transcarboxylase to acetyl-CoA to form malonyl-CoA. The protein is Acetyl-coenzyme A carboxylase carboxyl transferase subunit beta of Methylacidiphilum infernorum (isolate V4) (Methylokorus infernorum (strain V4)).